A 403-amino-acid polypeptide reads, in one-letter code: MTKIPMQPADSTPATFHPNAPTKTNILGMNQEQLGAYFKHIGEKPFRATQVMKWIYQHGVTDFAQMTNLSKGLREKLSEQACIELPEVMHKEFSEDGTRKWVFKVAGGSLVETVLIPADDSKVNGRKTLCISSQVGCALDCSFCSTGKQGFERDLTAAEIIGQLWVANASYMEGVDSTEWQNNVTNVVMMGMGEPLLNYTPVVSSMGLMLSDHAYGLSKRRVTLSTSGVVPKMYELYKDIDVALAISLHAPNDELRNELVPINKKYPLSELIAAAKAYVHDNNPRHKKHVTIEYVMLAGVNDSDEHAQQLVALLDGLPSKINLIPFNPFPHAPYDRSSNNRIHAFSNILNNAGFVCTIRQTRGDDIDAACGQLVGQVADRTRRSAKWQQSIKQRAANEQQSEG.

The tract at residues 1-25 (MTKIPMQPADSTPATFHPNAPTKTN) is disordered. E112 (proton acceptor) is an active-site residue. In terms of domain architecture, Radical SAM core spans 123-364 (VNGRKTLCIS…VCTIRQTRGD (242 aa)). A disulfide bridge links C130 with C370. Residues C137, C141, and C144 each contribute to the [4Fe-4S] cluster site. Residues 193-194 (GE), S225, 247-249 (SLH), and N327 contribute to the S-adenosyl-L-methionine site. The active-site S-methylcysteine intermediate is the C370.

It belongs to the radical SAM superfamily. RlmN family. [4Fe-4S] cluster serves as cofactor.

It localises to the cytoplasm. It carries out the reaction adenosine(2503) in 23S rRNA + 2 reduced [2Fe-2S]-[ferredoxin] + 2 S-adenosyl-L-methionine = 2-methyladenosine(2503) in 23S rRNA + 5'-deoxyadenosine + L-methionine + 2 oxidized [2Fe-2S]-[ferredoxin] + S-adenosyl-L-homocysteine. It catalyses the reaction adenosine(37) in tRNA + 2 reduced [2Fe-2S]-[ferredoxin] + 2 S-adenosyl-L-methionine = 2-methyladenosine(37) in tRNA + 5'-deoxyadenosine + L-methionine + 2 oxidized [2Fe-2S]-[ferredoxin] + S-adenosyl-L-homocysteine. Functionally, specifically methylates position 2 of adenine 2503 in 23S rRNA and position 2 of adenine 37 in tRNAs. m2A2503 modification seems to play a crucial role in the proofreading step occurring at the peptidyl transferase center and thus would serve to optimize ribosomal fidelity. The polypeptide is Dual-specificity RNA methyltransferase RlmN (Psychrobacter sp. (strain PRwf-1)).